We begin with the raw amino-acid sequence, 115 residues long: Putative membrane protein insertion efficiency factor (115 aa).

Positions 81–115 (DPRPGRCGCKDAGPAVSAGSTEGNPGRRTDGTDPD) are disordered. The span at 105–115 (PGRRTDGTDPD) shows a compositional bias: basic and acidic residues.

This sequence belongs to the UPF0161 family.

It localises to the cell inner membrane. Functionally, could be involved in insertion of integral membrane proteins into the membrane. This is Putative membrane protein insertion efficiency factor from Rhodospirillum rubrum (strain ATCC 11170 / ATH 1.1.1 / DSM 467 / LMG 4362 / NCIMB 8255 / S1).